A 225-amino-acid polypeptide reads, in one-letter code: RNA-binding protein 24 (225 aa).

The RRM domain maps to T11–L88.

Its subcellular location is the nucleus. The protein resides in the cytoplasm. Its function is as follows. Multifunctional RNA-binding protein involved in the regulation of pre-mRNA splicing, mRNA stability and mRNA translation important for cell fate decision and differentiation. Plays a major role in pre-mRNA alternative splicing regulation. Mediates preferentially muscle-specific exon inclusion in numerous mRNAs important for striated cardiac and skeletal muscle cell differentiation. Binds to intronic splicing enhancer (ISE) composed of stretches of GU-rich motifs localized in flanking intron of exon that will be included by alternative splicing. Involved in embryonic stem cell (ESC) transition to cardiac cell differentiation by promoting pre-mRNA alternative splicing events of several pluripotency and/or differentiation genes. Plays a role in the regulation of mRNA stability and mRNA translation to which it is bound. Involved in myogenic differentiation by regulating MYOG levels. Binds to a huge amount of mRNAs. Involved in embryonic heart development and myogenic differentiation of somitic muscle progenitors. In Gallus gallus (Chicken), this protein is RNA-binding protein 24.